A 101-amino-acid chain; its full sequence is Ubiquitin-related modifier 1 (101 aa).

Gly101 carries the 1-thioglycine modification. Gly101 participates in a covalent cross-link: Glycyl lysine isopeptide (Gly-Lys) (interchain with K-? in acceptor proteins).

It belongs to the URM1 family. In terms of processing, C-terminal thiocarboxylation occurs in 2 steps, it is first acyl-adenylated (-COAMP) via the hesA/moeB/thiF part of the MOCS3 homolog, then thiocarboxylated (-COSH) via the rhodanese domain of the MOCS3 homolog.

The protein localises to the cytoplasm. It participates in tRNA modification; 5-methoxycarbonylmethyl-2-thiouridine-tRNA biosynthesis. Acts as a sulfur carrier required for 2-thiolation of mcm(5)S(2)U at tRNA wobble positions of cytosolic tRNA(Lys), tRNA(Glu) and tRNA(Gln). Serves as sulfur donor in tRNA 2-thiolation reaction by being thiocarboxylated (-COSH) at its C-terminus by MOCS3. The sulfur is then transferred to tRNA to form 2-thiolation of mcm(5)S(2)U. Also acts as a ubiquitin-like protein (UBL) that is covalently conjugated via an isopeptide bond to lysine residues of target proteins. The thiocarboxylated form serves as substrate for conjugation and oxidative stress specifically induces the formation of UBL-protein conjugates. The sequence is that of Ubiquitin-related modifier 1 from Gallus gallus (Chicken).